Here is a 200-residue protein sequence, read N- to C-terminus: Probable GTP-binding protein EngB (200 aa).

The EngB-type G domain maps to 25–199; the sequence is SGYEVAFAGR…ISLLDRWYEW (175 aa). GTP-binding positions include 33–40, 60–64, 78–81, 145–148, and 178–180; these read GRSNAGKS, GRTQL, DLPG, TKAD, and FSS. Mg(2+)-binding residues include serine 40 and threonine 62.

This sequence belongs to the TRAFAC class TrmE-Era-EngA-EngB-Septin-like GTPase superfamily. EngB GTPase family. Mg(2+) serves as cofactor.

Necessary for normal cell division and for the maintenance of normal septation. This chain is Probable GTP-binding protein EngB, found in Legionella pneumophila (strain Corby).